The following is a 152-amino-acid chain: Keratin, high-sulfur matrix protein, B2C (152 aa).

Residue A2 is modified to N-acetylalanine. 3 consecutive repeats follow at residues 27–36 (STCSQTSCCQ), 37–46 (PTSIQTSCCQ), and 47–56 (PTCLQTSGCE).

The keratin products of mammalian epidermal derivatives such as wool and hair consist of microfibrils embedded in a rigid matrix of other proteins. The matrix proteins include the high-sulfur and high-tyrosine keratins, having molecular weights of 6-20 kDa, whereas the microfibrils contain the larger, low-sulfur keratins (40-56 kDa). This is Keratin, high-sulfur matrix protein, B2C from Ovis aries (Sheep).